The chain runs to 100 residues: Large ribosomal subunit protein uL23 (100 aa).

The protein belongs to the universal ribosomal protein uL23 family. As to quaternary structure, part of the 50S ribosomal subunit. Contacts protein L29, and trigger factor when it is bound to the ribosome.

In terms of biological role, one of the early assembly proteins it binds 23S rRNA. One of the proteins that surrounds the polypeptide exit tunnel on the outside of the ribosome. Forms the main docking site for trigger factor binding to the ribosome. The polypeptide is Large ribosomal subunit protein uL23 (Yersinia enterocolitica serotype O:8 / biotype 1B (strain NCTC 13174 / 8081)).